Here is a 477-residue protein sequence, read N- to C-terminus: Bile acid transporter (477 aa).

Transmembrane regions (helical) follow at residues 13–33 (FVPF…TAVL), 50–70 (WISL…GKLG), 83–103 (IVIF…IFML), 107–127 (FIVG…IVTE), 139–159 (LYML…GLIM), 166–186 (VMMW…TFSI), 206–226 (LVVV…NIGW), 228–248 (STAF…LVMV), 272–292 (LILF…IVFV), 301–321 (IISS…SVII), 333–353 (VLTF…LFKA), 359–379 (IFAA…TIFM), 381–401 (VALS…YGLF), 406–426 (APFG…ANIA), and 444–464 (ISSI…GIIL).

The protein belongs to the major facilitator superfamily.

It localises to the cell membrane. It participates in lipid metabolism; bile acid degradation. This is Bile acid transporter (baiG) from Clostridium scindens (strain JCM 10418 / VPI 12708).